Here is a 381-residue protein sequence, read N- to C-terminus: Protein RecA (381 aa).

79–86 (GPESSGKT) contacts ATP.

This sequence belongs to the RecA family.

Its subcellular location is the cytoplasm. In terms of biological role, can catalyze the hydrolysis of ATP in the presence of single-stranded DNA, the ATP-dependent uptake of single-stranded DNA by duplex DNA, and the ATP-dependent hybridization of homologous single-stranded DNAs. It interacts with LexA causing its activation and leading to its autocatalytic cleavage. This Streptococcus parasanguinis protein is Protein RecA.